The following is a 653-amino-acid chain: Threonine--tRNA ligase (653 aa).

In terms of domain architecture, TGS spans 1 to 61 (MIKITFPDGN…NEDAEVKLFK (61 aa)). Residues 243–542 (DHRKIGKELE…LIEHTAGKFP (300 aa)) form a catalytic region. Zn(2+) is bound by residues cysteine 338, histidine 389, and histidine 519.

It belongs to the class-II aminoacyl-tRNA synthetase family. As to quaternary structure, homodimer. The cofactor is Zn(2+).

It is found in the cytoplasm. The enzyme catalyses tRNA(Thr) + L-threonine + ATP = L-threonyl-tRNA(Thr) + AMP + diphosphate + H(+). Catalyzes the attachment of threonine to tRNA(Thr) in a two-step reaction: L-threonine is first activated by ATP to form Thr-AMP and then transferred to the acceptor end of tRNA(Thr). Also edits incorrectly charged L-seryl-tRNA(Thr). The sequence is that of Threonine--tRNA ligase from Porphyromonas gingivalis (strain ATCC 33277 / DSM 20709 / CIP 103683 / JCM 12257 / NCTC 11834 / 2561).